The sequence spans 567 residues: Proline--tRNA ligase (567 aa).

It belongs to the class-II aminoacyl-tRNA synthetase family. ProS type 1 subfamily. As to quaternary structure, homodimer.

It localises to the cytoplasm. It carries out the reaction tRNA(Pro) + L-proline + ATP = L-prolyl-tRNA(Pro) + AMP + diphosphate. Catalyzes the attachment of proline to tRNA(Pro) in a two-step reaction: proline is first activated by ATP to form Pro-AMP and then transferred to the acceptor end of tRNA(Pro). As ProRS can inadvertently accommodate and process non-cognate amino acids such as alanine and cysteine, to avoid such errors it has two additional distinct editing activities against alanine. One activity is designated as 'pretransfer' editing and involves the tRNA(Pro)-independent hydrolysis of activated Ala-AMP. The other activity is designated 'posttransfer' editing and involves deacylation of mischarged Ala-tRNA(Pro). The misacylated Cys-tRNA(Pro) is not edited by ProRS. The chain is Proline--tRNA ligase from Staphylococcus aureus (strain bovine RF122 / ET3-1).